The following is a 354-amino-acid chain: MTELKNDRYLRALLRQPVDVTPVWMMRQAGRYLPEYKATRAQAGDFMSLCKNAELACEVTLQPLRRYPLDAAILFSDILTIPDAMGLGLYFEAGEGPRFTAPVTCKADVDKLPIPDPEDELGYVMNAVRTIRRELKGEVPLIGFSGSPWTLATYMVEGGSSKAFTVIKKMMYADPQALHLLLDKLAKSVTLYLNAQIKAGAQSVMIFDTWGGVLTGRDYQQFSLYYMHKIVDGLLRENDGRRVPVTLFTKGGGQWLEAMAETGCDALGLDWTTDIADARRRVGHKVALQGNMDPSMLYAPPARIEDEVATILAGFGQGEGHVFNLGHGIHQDVPPEHAGAFVEAVHQLSAQYHN.

Residues 27–31 (RQAGR), Asp-77, Tyr-154, Thr-209, and His-327 contribute to the substrate site.

The protein belongs to the uroporphyrinogen decarboxylase family. In terms of assembly, homodimer.

Its subcellular location is the cytoplasm. The catalysed reaction is uroporphyrinogen III + 4 H(+) = coproporphyrinogen III + 4 CO2. Its pathway is porphyrin-containing compound metabolism; protoporphyrin-IX biosynthesis; coproporphyrinogen-III from 5-aminolevulinate: step 4/4. Functionally, catalyzes the decarboxylation of four acetate groups of uroporphyrinogen-III to yield coproporphyrinogen-III. The protein is Uroporphyrinogen decarboxylase of Salmonella agona (strain SL483).